The primary structure comprises 501 residues: Aldehyde dehydrogenase 1A1 (501 aa).

N-acetylserine is present on serine 2. Lysine 91 and lysine 128 each carry N6-acetyllysine. NAD(+) is bound by residues 167-170 (IPWN), 193-196 (KPAE), 226-227 (GP), and 246-247 (GS). An N6-acetyllysine modification is found at lysine 252. Residue glutamate 269 is the Proton acceptor of the active site. 269–271 (ELG) lines the NAD(+) pocket. The active-site Nucleophile is the cysteine 303. The mediates interaction with PRMT3 stretch occupies residues 336-501 (LNSGINQGPQ…VAIKISQKNS (166 aa)). 349 to 353 (EQHDK) is a binding site for NAD(+). An N6-acetyllysine mark is found at lysine 353 and lysine 367. Residue 400–402 (EIF) coordinates NAD(+). Lysine 410 is subject to N6-acetyllysine. At serine 413 the chain carries Phosphoserine. N6-acetyllysine occurs at positions 419, 435, and 495.

Belongs to the aldehyde dehydrogenase family. As to quaternary structure, homotetramer. Interacts with PRMT3; the interaction is direct, inhibits ALDH1A1 aldehyde dehydrogenase activity and is independent of the methyltransferase activity of PRMT3. In terms of processing, the N-terminus is blocked most probably by acetylation.

Its subcellular location is the cytoplasm. The protein resides in the cytosol. It is found in the cell projection. It localises to the axon. It catalyses the reaction an aldehyde + NAD(+) + H2O = a carboxylate + NADH + 2 H(+). It carries out the reaction all-trans-retinal + NAD(+) + H2O = all-trans-retinoate + NADH + 2 H(+). The enzyme catalyses 9-cis-retinal + NAD(+) + H2O = 9-cis-retinoate + NADH + 2 H(+). The catalysed reaction is 11-cis-retinal + NAD(+) + H2O = 11-cis-retinoate + NADH + 2 H(+). It catalyses the reaction 13-cis-retinal + NAD(+) + H2O = 13-cis-retinoate + NADH + 2 H(+). It carries out the reaction 3-deoxyglucosone + NAD(+) + H2O = 2-dehydro-3-deoxy-D-gluconate + NADH + 2 H(+). The enzyme catalyses (E)-4-hydroxynon-2-enal + NAD(+) + H2O = (E)-4-hydroxynon-2-enoate + NADH + 2 H(+). The catalysed reaction is malonaldehyde + NAD(+) + H2O = 3-oxopropanoate + NADH + 2 H(+). It catalyses the reaction hexanal + NAD(+) + H2O = hexanoate + NADH + 2 H(+). It carries out the reaction propanal + NAD(+) + H2O = propanoate + NADH + 2 H(+). The enzyme catalyses acetaldehyde + NAD(+) + H2O = acetate + NADH + 2 H(+). The catalysed reaction is benzaldehyde + NAD(+) + H2O = benzoate + NADH + 2 H(+). It catalyses the reaction 4-aminobutanal + NAD(+) + H2O = 4-aminobutanoate + NADH + 2 H(+). It participates in cofactor metabolism; retinol metabolism. Functionally, cytosolic dehydrogenase that catalyzes the irreversible oxidation of a wide range of aldehydes to their corresponding carboxylic acid. Functions downstream of retinol dehydrogenases and catalyzes the oxidation of retinaldehyde into retinoic acid, the second step in the oxidation of retinol/vitamin A into retinoic acid. This pathway is crucial to control the levels of retinol and retinoic acid, two important molecules which excess can be teratogenic and cytotoxic. Also oxidizes aldehydes resulting from lipid peroxidation like (E)-4-hydroxynon-2-enal/HNE, malonaldehyde and hexanal that form protein adducts and are highly cytotoxic. By participating for instance to the clearance of (E)-4-hydroxynon-2-enal/HNE in the lens epithelium prevents the formation of HNE-protein adducts and lens opacification. Also functions downstream of fructosamine-3-kinase in the fructosamine degradation pathway by catalyzing the oxidation of 3-deoxyglucosone, the carbohydrate product of fructosamine 3-phosphate decomposition, which is itself a potent glycating agent that may react with lysine and arginine side-chains of proteins. Also has an aminobutyraldehyde dehydrogenase activity and is probably part of an alternative pathway for the biosynthesis of GABA/4-aminobutanoate in midbrain, thereby playing a role in GABAergic synaptic transmission. In Mesocricetus auratus (Golden hamster), this protein is Aldehyde dehydrogenase 1A1.